Consider the following 85-residue polypeptide: Translational regulator CsrA (85 aa).

The protein belongs to the CsrA/RsmA family. Homodimer; the beta-strands of each monomer intercalate to form a hydrophobic core, while the alpha-helices form wings that extend away from the core.

It localises to the cytoplasm. In terms of biological role, a translational regulator that binds mRNA to regulate translation initiation and/or mRNA stability. Usually binds in the 5'-UTR at or near the Shine-Dalgarno sequence preventing ribosome-binding, thus repressing translation. Its main target seems to be the major flagellin gene, while its function is anatagonized by FliW. The polypeptide is Translational regulator CsrA (Leifsonia xyli subsp. xyli (strain CTCB07)).